A 421-amino-acid chain; its full sequence is Esterase LipQ (421 aa).

Residues serine 249, aspartate 344, and histidine 377 contribute to the active site.

This sequence belongs to the 'GDXG' lipolytic enzyme family.

It catalyses the reaction hexadecanoate ester + H2O = an aliphatic alcohol + hexadecanoate + H(+). Functionally, shows lipase activity. Is highly immunogenic and may play an important role in the virulence and pathogenesis of M.tuberculosis infection, by altering the balance of cytokines. Significantly down-regulates the expression level of pro-inflammatory cytokines (TNF-alpha and IFN-gamma) and up-regulates the level of anti-inflammatory cytokines such as IL-4 and IL-10 as compared to LPS stimulated macrophages. Also inhibits the expression of iNOS, TLR2 and transcription factor NF-kappa-B in LPS stimulated macrophages whereas the expression of TLR-4 remains unchanged. The sequence is that of Esterase LipQ from Mycobacterium tuberculosis (strain ATCC 25618 / H37Rv).